The primary structure comprises 540 residues: UDP-N-acetylmuramyl-tripeptide synthetase (540 aa).

Serine 33 serves as a coordination point for UDP-N-acetyl-alpha-D-muramoyl-L-alanyl-D-glutamate. 114–120 serves as a coordination point for ATP; it reads GTEGKSS. Residues 158 to 159, serine 185, and arginine 195 contribute to the UDP-N-acetyl-alpha-D-muramoyl-L-alanyl-D-glutamate site; that span reads TT. An N6-carboxylysine modification is found at lysine 227.

This sequence belongs to the MurCDEF family. MurE subfamily. Post-translationally, carboxylation is probably crucial for Mg(2+) binding and, consequently, for the gamma-phosphate positioning of ATP.

Its subcellular location is the cytoplasm. It functions in the pathway cell wall biogenesis; peptidoglycan biosynthesis. Its function is as follows. Catalyzes the addition of an amino acid to the nucleotide precursor UDP-N-acetylmuramoyl-L-alanyl-D-glutamate (UMAG) in the biosynthesis of bacterial cell-wall peptidoglycan. This Treponema pallidum (strain Nichols) protein is UDP-N-acetylmuramyl-tripeptide synthetase.